A 688-amino-acid chain; its full sequence is Potassium-transporting ATPase ATP-binding subunit (688 aa).

4 helical membrane passes run 37 to 57, 65 to 85, 219 to 239, and 262 to 282; these read FIVYIASILTTVLYVFSLFGI, ILFISILLWFTVLFANFAEAI, IALQILLVSLTIIFLVVTASL, and LALLVCLAPTTIGALLSAIGI. Residue Asp-313 is the 4-aspartylphosphate intermediate of the active site. ATP contacts are provided by residues Asp-350, Glu-354, 383 to 390, and Lys-401; that span reads FTAKTRMS. Residues Asp-524 and Asp-528 each contribute to the Mg(2+) site. 3 consecutive transmembrane segments (helical) span residues 586 to 606, 622 to 642, and 668 to 688; these read IANDIAKYFAIIPPLFIGLFP, AILSAVIYNAFIIIFLIPLAL, and IIAPFIAIKGIDILITMLGIV.

Belongs to the cation transport ATPase (P-type) (TC 3.A.3) family. Type IA subfamily. As to quaternary structure, the system is composed of three essential subunits: KdpA, KdpB and KdpC.

It is found in the cell membrane. It carries out the reaction K(+)(out) + ATP + H2O = K(+)(in) + ADP + phosphate + H(+). Functionally, part of the high-affinity ATP-driven potassium transport (or Kdp) system, which catalyzes the hydrolysis of ATP coupled with the electrogenic transport of potassium into the cytoplasm. This subunit is responsible for energy coupling to the transport system and for the release of the potassium ions to the cytoplasm. The chain is Potassium-transporting ATPase ATP-binding subunit from Clostridium perfringens (strain ATCC 13124 / DSM 756 / JCM 1290 / NCIMB 6125 / NCTC 8237 / Type A).